A 298-amino-acid chain; its full sequence is PYK10-binding protein 1 (298 aa).

Ala2 is subject to N-acetylalanine. 2 Jacalin-type lectin domains span residues 2–142 (AQKV…YFAP) and 152–295 (AKQL…HVRP). A Phosphoserine modification is found at Ser20.

The protein belongs to the jacalin lectin family. Component of the PYK10 complex, at least composed of PYK10/BGLU23, BGLU21, BGLU22, JAL22, JAL23, PBP1/JAL30, PBP2/JAL31, JAL32, JAL33, JAL34, JAL35, GLL22 and GLL23. In terms of tissue distribution, expressed exclusively in roots.

Its subcellular location is the cytoplasm. In terms of biological role, inhibitor-type lectin that may regulate the correct polymerization of BGLU23/PYK10 upon tissue damage. Activates BGLU21, BGLU22 and BGLU23. This chain is PYK10-binding protein 1 (PBP1), found in Arabidopsis thaliana (Mouse-ear cress).